Reading from the N-terminus, the 265-residue chain is Endochitinase At2g43580 (265 aa).

A signal peptide spans 1-24 (MALTKIFLILLLSLLGLYSETVKS). The Chitin-binding type-1 domain occupies 25-59 (QNCDCAPNLCCSQFGYCGTTADYCGSTCQSGPCRV). Intrachain disulfides connect cysteine 27-cysteine 35, cysteine 29-cysteine 41, cysteine 34-cysteine 48, and cysteine 52-cysteine 57. Residues 67–265 (GLVGNIVTQI…GLDPGANITC (199 aa)) are catalytic. N-linked (GlcNAc...) asparagine glycosylation occurs at asparagine 102. Residue glutamate 129 is the Proton donor of the active site. Asparagine 262 is a glycosylation site (N-linked (GlcNAc...) asparagine).

Belongs to the glycosyl hydrolase 19 family. Chitinase class I subfamily.

The catalysed reaction is Random endo-hydrolysis of N-acetyl-beta-D-glucosaminide (1-&gt;4)-beta-linkages in chitin and chitodextrins.. The protein is Endochitinase At2g43580 of Arabidopsis thaliana (Mouse-ear cress).